The sequence spans 641 residues: Uromodulin (641 aa).

The signal sequence occupies residues 1–24 (MGQPPLTWMLMVVVASWFITTAAT). N-linked (GlcNAc...) asparagine glycosylation occurs at asparagine 25. The 37-residue stretch at 28–64 (EARWCSECHSNATCTEDEAVTTCTCQEGFTGDGLTCV) folds into the EGF-like 1 domain. Cystine bridges form between cysteine 32/cysteine 41, cysteine 35/cysteine 50, cysteine 52/cysteine 63, cysteine 69/cysteine 83, cysteine 77/cysteine 92, cysteine 94/cysteine 106, cysteine 112/cysteine 126, cysteine 120/cysteine 135, cysteine 137/cysteine 148, cysteine 150/cysteine 161, cysteine 155/cysteine 170, cysteine 174/cysteine 267, cysteine 195/cysteine 282, cysteine 217/cysteine 255, cysteine 223/cysteine 287, cysteine 248/cysteine 256, cysteine 297/cysteine 306, cysteine 300/cysteine 315, cysteine 317/cysteine 347, cysteine 335/cysteine 425, and cysteine 366/cysteine 389. In terms of domain architecture, EGF-like 2; calcium-binding spans 65–107 (DLDECAIPGAHNCSANSSCVNTPGSFSCVCPEGFRLSPGLGCT). N-linked (GlcNAc...) asparagine glycosylation is present at asparagine 76. In terms of domain architecture, EGF-like 3; calcium-binding spans 108-149 (DVDECAEPGLSHCHALATCVNVVGNYLCVCPAGYRGDGWHCE). Positions 150 to 171 (CSPGSCGPGLDCVPEGDALVCA) are beta hairpin. The tract at residues 172–291 (DPCQAHRTLD…CHLAYCTDPS (120 aa)) is D10C. The N-linked (GlcNAc...) asparagine glycan is linked to asparagine 232. Asparagine 275 carries an N-linked (GlcNAc...) asparagine glycan. In terms of domain architecture, EGF-like 4 spans 292 to 323 (SVEGTCEECSIDEDCKSDNGRWHCQCKQDFNI). Residue asparagine 322 is glycosylated (N-linked (GlcNAc...) asparagine). The tract at residues 334–429 (ECGANDMKVS…KINFACSYPL (96 aa)) is ZP-N. The region spanning 334–589 (ECGANDMKVS…PTCSGTRFRS (256 aa)) is the ZP domain. The interval 430 to 453 (DMKVSLKTSLQPVVSALNITVGGT) is flexible ZP-N/ZP-C linker; important for secretion and polymerization into filaments. Asparagine 447 is a glycosylation site (N-linked (GlcNAc...) asparagine). The interval 454–464 (GMFTVRMALFQ) is internal hydrophobic patch (IHP). Residues 454–589 (GMFTVRMALF…PTCSGTRFRS (136 aa)) are ZP-C. Cystine bridges form between cysteine 506–cysteine 566, cysteine 527–cysteine 582, and cysteine 571–cysteine 578. Residues 586–589 (RFRS) are essential for cleavage by HPN. An external hydrophobic patch (EHP); regulates polymerization into filaments region spans residues 598–606 (VLNLGPITR). Serine 614 is lipidated: GPI-anchor amidated serine. Residues 615–641 (RAAFSSLGLLKVWLPLLLSATLTLTFQ) constitute a propeptide, removed in mature form.

Homodimer that then polymerizes into long filaments. The filaments can additionally assemble laterally to form a sheet. The filaments consist of a zigzag-shaped backbone with laterally protruding arms which interact with bacterial adhesin fimH. Two fimH molecules can bind to a single UMOD monomer. N-glycosylated. In terms of processing, proteolytically cleaved at a conserved C-terminal proteolytic cleavage site to generate the secreted form found in urine. This cleavage is catalyzed by HPN.

It is found in the apical cell membrane. The protein localises to the basolateral cell membrane. Its subcellular location is the cell projection. The protein resides in the cilium membrane. It localises to the secreted. Its function is as follows. Functions in biogenesis and organization of the apical membrane of epithelial cells of the thick ascending limb of Henle's loop (TALH), where it promotes formation of complex filamentous gel-like structure that may play a role in the water barrier permeability. May serve as a receptor for binding and endocytosis of cytokines (IL-1, IL-2) and TNF. Facilitates neutrophil migration across renal epithelia. In the urine, may contribute to colloid osmotic pressure, retards passage of positively charged electrolytes, and inhibits formation of liquid containing supersaturated salts and subsequent formation of salt crystals. Protects against urinary tract infections by binding to type 1 fimbriated E.coli. Binds to bacterial adhesin fimH which mediates the stable formation of bacterial aggregates, prevents the binding of E.coli to uroplakins UPK1A and UPK1B which act as urothelial receptors for type I fimbriae, and allows for pathogen clearance through micturation. Also promotes aggregation of other bacteria including K.pneumoniae, P.aeruginosa and S.mitis and so may also protect against other uropathogens. The chain is Uromodulin (UMOD) from Pongo abelii (Sumatran orangutan).